The primary structure comprises 494 residues: Flap endonuclease 1 (494 aa).

The segment at 1-106 (MGIKGLIPFL…KTLEKRRQQR (106 aa)) is N-domain. Position 34 (Asp-34) interacts with Mg(2+). The DNA site is built by Arg-47 and Arg-72. The Mg(2+) site is built by Asp-88, Glu-160, Glu-162, Asp-181, and Asp-183. The interval 124–253 (SVKKLVGRTV…KTAYSLVKKY (130 aa)) is I-domain. Glu-160 contacts DNA. Gly-231 and Asp-233 together coordinate DNA. Asp-233 contributes to the Mg(2+) binding site. Residues 330 to 338 (IQTSLLSFL) form an interaction with PCNA region. Disordered stretches follow at residues 341–382 (PQHN…ESST) and 395–426 (LFCEPSNSDNEEDDRGRVDKNEDLFKKSENET). Over residues 408-426 (DRGRVDKNEDLFKKSENET) the composition is skewed to basic and acidic residues.

Belongs to the XPG/RAD2 endonuclease family. FEN1 subfamily. Interacts with PCNA. Three molecules of FEN1 bind to one PCNA trimer with each molecule binding to one PCNA monomer. PCNA stimulates the nuclease activity without altering cleavage specificity. Mg(2+) serves as cofactor. In terms of processing, phosphorylated. Phosphorylation upon DNA damage induces relocalization to the nuclear plasma.

The protein resides in the nucleus. The protein localises to the nucleolus. It localises to the nucleoplasm. Its subcellular location is the mitochondrion. Functionally, structure-specific nuclease with 5'-flap endonuclease and 5'-3' exonuclease activities involved in DNA replication and repair. During DNA replication, cleaves the 5'-overhanging flap structure that is generated by displacement synthesis when DNA polymerase encounters the 5'-end of a downstream Okazaki fragment. It enters the flap from the 5'-end and then tracks to cleave the flap base, leaving a nick for ligation. Also involved in the long patch base excision repair (LP-BER) pathway, by cleaving within the apurinic/apyrimidinic (AP) site-terminated flap. Acts as a genome stabilization factor that prevents flaps from equilibrating into structures that lead to duplications and deletions. Also possesses 5'-3' exonuclease activity on nicked or gapped double-stranded DNA, and exhibits RNase H activity. Also involved in replication and repair of rDNA and in repairing mitochondrial DNA. This chain is Flap endonuclease 1, found in Theileria parva (East coast fever infection agent).